A 376-amino-acid polypeptide reads, in one-letter code: 1-acyl-sn-glycerol-3-phosphate acyltransferase gamma (376 aa).

Topologically, residues 1-124 (MGLLAYLKTQ…LGSSKVLAKR (124 aa)) are cytoplasmic. An HXXXXD motif motif is present at residues 96-101 (HNFEID). A helical transmembrane segment spans residues 125 to 145 (ELLCVPLIGWTWYFLEIVFCK). Topologically, residues 146–316 (RKWEEDRDTV…TLLNFLCWAT (171 aa)) are lumenal. Residues 317 to 339 (ILLSPLFSFVLGVFASGSPLLIL) traverse the membrane as a helical segment. Residues 340-376 (TFLGFVGAASFGVRRLIGVTEIEKGSSYGNQELKKKE) are Cytoplasmic-facing.

Belongs to the 1-acyl-sn-glycerol-3-phosphate acyltransferase family. As to expression, widely expressed. Mainly expressed in testis, kidney and liver (at protein level).

It is found in the endoplasmic reticulum membrane. It localises to the nucleus envelope. The catalysed reaction is a 1-acyl-sn-glycero-3-phosphate + an acyl-CoA = a 1,2-diacyl-sn-glycero-3-phosphate + CoA. The enzyme catalyses pentadecanoyl-CoA + 1-(9Z-octadecenoyl)-sn-glycero-3-phosphate = 1-(9Z)-octadecenoyl-2-pentadecanoyl-sn-glycero-3-phosphate + CoA. It carries out the reaction heptadecanoyl-CoA + 1-(9Z-octadecenoyl)-sn-glycero-3-phosphate = 1-(9Z)-octadecenoyl-2-heptadecanoyl-sn-glycero-3-phosphate + CoA. It catalyses the reaction 1-(9Z-octadecenoyl)-sn-glycero-3-phosphate + octadecanoyl-CoA = 1-(9Z-octadecenoyl)-2-octadecanoyl-sn-glycero-3-phosphate + CoA. The catalysed reaction is nonadecanoyl-CoA + 1-(9Z-octadecenoyl)-sn-glycero-3-phosphate = 1-(9Z)-octadecenoyl-2-nonadecanoyl-sn-glycero-3-phosphate + CoA. The enzyme catalyses 1-(9Z-octadecenoyl)-sn-glycero-3-phosphate + (5Z,8Z,11Z,14Z)-eicosatetraenoyl-CoA = 1-(9Z)-octadecenoyl-2-(5Z,8Z,11Z,14Z)-eicosatetraenoyl-sn-glycero-3-phosphate + CoA. It carries out the reaction 1-(9Z-octadecenoyl)-sn-glycero-3-phosphate + (9Z)-octadecenoyl-CoA = 1,2-di-(9Z-octadecenoyl)-sn-glycero-3-phosphate + CoA. It catalyses the reaction 1-(9Z-octadecenoyl)-sn-glycero-3-phosphate + (9Z,12Z)-octadecadienoyl-CoA = 1-(9Z)-octadecenoyl-2-(9Z,12Z)-octadecadienoyl-sn-glycero-3-phosphate + CoA. The catalysed reaction is 1-(9Z-octadecenoyl)-sn-glycero-3-phosphocholine + (5Z,8Z,11Z,14Z)-eicosatetraenoyl-CoA = 1-(9Z)-octadecenoyl-2-(5Z,8Z,11Z,14Z)-icosatetraenoyl-sn-glycero-3-phosphocholine + CoA. The enzyme catalyses 1-(9Z-octadecenoyl)-sn-glycero-3-phospho-(1D-myo-inositol) + (5Z,8Z,11Z,14Z)-eicosatetraenoyl-CoA = 1-(9Z-octadecenoyl)-2-(5Z,8Z,11Z,14Z-eicosatetraenoyl)-sn-glycero-3-phospho-1D-myo-inositol + CoA. It carries out the reaction 1-(9Z-octadecenoyl)-sn-glycero-3-phospho-L-serine + (5Z,8Z,11Z,14Z)-eicosatetraenoyl-CoA = 1-(9Z-octadecenoyl)-2-(5Z,8Z,11Z,14Z-eicosatetraenoyl)-sn-glycero-3-phospho-L-serine + CoA. It catalyses the reaction 1-hexadecanoyl-sn-glycero-3-phosphate + (9Z)-octadecenoyl-CoA = 1-hexadecanoyl-2-(9Z-octadecenoyl)-sn-glycero-3-phosphate + CoA. The catalysed reaction is 1-hexadecanoyl-sn-glycero-3-phosphate + (5Z,8Z,11Z,14Z)-eicosatetraenoyl-CoA = 1-hexadecanoyl-2-(5Z,8Z,11Z,14Z-eicosatetraenoyl)-sn-glycero-3-phosphate + CoA. The enzyme catalyses 1-heptadecanoyl-sn-glycero-3-phosphate + (5Z,8Z,11Z,14Z)-eicosatetraenoyl-CoA = 1-heptadecanoyl-2-(5Z,8Z,11Z,14Z)-eicosatetraenoyl-sn-glycero-3-phosphate + CoA. It carries out the reaction 1-octadecanoyl-sn-glycero-3-phosphate + (9Z)-octadecenoyl-CoA = 1-octadecanoyl-2-(9Z-octadecenoyl)-sn-glycero-3-phosphate + CoA. It catalyses the reaction 1-octadecanoyl-sn-glycero-3-phosphate + (5Z,8Z,11Z,14Z)-eicosatetraenoyl-CoA = 1-octadecanoyl-2-(5Z,8Z,11Z,14Z-eicosatetraenoyl)-sn-glycero-3-phosphate + CoA. The catalysed reaction is 1-(9Z-octadecenoyl)-sn-glycero-3-phosphate + hexadecanoyl-CoA = 1-hexadecanoyl-2-(9Z-octadecenoyl)-sn-glycero-3-phosphate + CoA. The enzyme catalyses 1-O-(9Z-octadecenyl)-sn-glycero-3-phosphate + (5Z,8Z,11Z,14Z)-eicosatetraenoyl-CoA = 1-O-(9Z-octadecenyl)-2-(5Z,8Z,11Z,14Z-eicosatetraenoyl)-sn-glycero-3-phosphate + CoA. It carries out the reaction a 1-acyl-sn-glycero-3-phospho-(1D-myo-inositol) + (5Z,8Z,11Z,14Z)-eicosatetraenoyl-CoA = a 1-acyl-2-(5Z,8Z,11Z,14Z-eicosatetraenoyl)-sn-glycero-3-phospho-(1D-myo-inositol) + CoA. It participates in phospholipid metabolism; CDP-diacylglycerol biosynthesis; CDP-diacylglycerol from sn-glycerol 3-phosphate: step 2/3. With respect to regulation, in males, activity increases in an age-dependent fashion, maybe derived from the induction by sex-hormones. In terms of biological role, converts 1-acyl-sn-glycerol-3-phosphate (lysophosphatidic acid or LPA) into 1,2-diacyl-sn-glycerol-3-phosphate (phosphatidic acid or PA) by incorporating an acyl moiety at the sn-2 position of the glycerol backbone. Acts on LPA containing saturated or unsaturated fatty acids C16:0-C20:4 at the sn-1 position using C18:1, C20:4 or C18:2-CoA as the acyl donor. Also acts on lysophosphatidylcholine, lysophosphatidylinositol and lysophosphatidylserine using C18:1 or C20:4-CoA. Has a preference for arachidonoyl-CoA as a donor. Also has a modest lysophosphatidylinositol acyltransferase (LPIAT) activity, converts lysophosphatidylinositol (LPI) into phosphatidylinositol. This is 1-acyl-sn-glycerol-3-phosphate acyltransferase gamma from Mus musculus (Mouse).